Reading from the N-terminus, the 388-residue chain is Protochlorophyllide reductase A, chloroplastic (388 aa).

The transit peptide at 1–74 directs the protein to the chloroplast; it reads MALQLLPSTL…SPSGKKTLRQ (74 aa). The segment covering 48 to 68 has biased composition (low complexity); the sequence is VATAPSPVTTSPGSTASSPSG. Residues 48-69 form a disordered region; the sequence is VATAPSPVTTSPGSTASSPSGK.

This sequence belongs to the short-chain dehydrogenases/reductases (SDR) family. POR subfamily.

The protein localises to the plastid. It localises to the chloroplast. The enzyme catalyses chlorophyllide a + NADP(+) = protochlorophyllide a + NADPH + H(+). Its pathway is porphyrin-containing compound metabolism; chlorophyll biosynthesis. Functionally, phototransformation of protochlorophyllide (Pchlide) to chlorophyllide (Chlide). The protein is Protochlorophyllide reductase A, chloroplastic (PORA) of Hordeum vulgare (Barley).